Here is a 226-residue protein sequence, read N- to C-terminus: Probable amino-acid ABC transporter permease protein YckA (226 aa).

The region spanning 27–215 (IGYTLLISFV…AICSIAAVFQ (189 aa)) is the ABC transmembrane type-1 domain. 5 consecutive transmembrane segments (helical) span residues 31-51 (LLIS…ISLA), 73-93 (VPIL…GIEF), 94-114 (SAVT…IAEI), 160-180 (VLLD…PELL), and 194-214 (MTMY…AAVF).

Belongs to the binding-protein-dependent transport system permease family. HisMQ subfamily.

It localises to the cell membrane. Functionally, part of a binding-protein-dependent transport system. Probably responsible for the translocation of the substrate across the membrane. The sequence is that of Probable amino-acid ABC transporter permease protein YckA (yckA) from Bacillus subtilis (strain 168).